The primary structure comprises 462 residues: Asparagine--tRNA ligase (462 aa).

The protein belongs to the class-II aminoacyl-tRNA synthetase family. As to quaternary structure, homodimer.

It is found in the cytoplasm. It catalyses the reaction tRNA(Asn) + L-asparagine + ATP = L-asparaginyl-tRNA(Asn) + AMP + diphosphate + H(+). The chain is Asparagine--tRNA ligase from Borreliella afzelii (strain PKo) (Borrelia afzelii).